A 445-amino-acid chain; its full sequence is Phosphoglucosamine mutase (445 aa).

The Phosphoserine intermediate role is filled by Ser-102. Ser-102, Asp-241, Asp-243, and Asp-245 together coordinate Mg(2+). Ser-102 carries the post-translational modification Phosphoserine.

It belongs to the phosphohexose mutase family. Requires Mg(2+) as cofactor. Activated by phosphorylation.

The enzyme catalyses alpha-D-glucosamine 1-phosphate = D-glucosamine 6-phosphate. Its function is as follows. Catalyzes the conversion of glucosamine-6-phosphate to glucosamine-1-phosphate. The polypeptide is Phosphoglucosamine mutase (Escherichia coli O127:H6 (strain E2348/69 / EPEC)).